Consider the following 345-residue polypeptide: Type II methyltransferase M.AplI (345 aa).

Positions 25-325 constitute an SAM-dependent MTase C5-type domain; it reads LVVLDLFAGC…KSVKMTLENK (301 aa). Cysteine 93 is an active-site residue.

Belongs to the class I-like SAM-binding methyltransferase superfamily. C5-methyltransferase family.

It carries out the reaction a 2'-deoxycytidine in DNA + S-adenosyl-L-methionine = a 5-methyl-2'-deoxycytidine in DNA + S-adenosyl-L-homocysteine + H(+). Functionally, a methylase, recognizes the double-stranded sequence 5'-CTGCAG-3', methylates C-4 on both strands, and protects the DNA from cleavage by the AplI endonuclease. The polypeptide is Type II methyltransferase M.AplI (aplIM) (Arthrospira platensis (strain NIES-39 / UTEX 3086 / IAM M-135) (Spirulina platensis)).